Here is a 329-residue protein sequence, read N- to C-terminus: MSAFDTNPFADPVDVNPFQDPSVTQLTNAPQSGLAEFNPFSETNAATTVPATQAPGPSQPAVLQPSVEPAQPTPQAVAAAAQAGLLRQQEELDRKAAELERKERELQNTAANLHVRDNNWPPLPSWCPVKPCFYQDFSTEIPADYQRICKMLYYLWMLHSVTLFLNLLACLAWFTSDAANGTAFGLSILWFLIFTPCAFLCWYRPIYKAFRSDNSFSFFVFFFVFFCQIGIYFIQLIGLPNLGTSGWLAALSTMKNGPLAVTIIMMVVAGFFTLCAGLSLFLLQRVHAFYRRTGASFQQAQEEFSQGIFSSRTFRGAASSAARGAFQGN.

Residues 1–74 form a disordered region; that stretch reads MSAFDTNPFA…PSVEPAQPTP (74 aa). Residues 1-153 lie on the Cytoplasmic side of the membrane; the sequence is MSAFDTNPFA…DYQRICKMLY (153 aa). Polar residues-rich tracts occupy residues 19 to 31 and 40 to 51; these read QDPSVTQLTNAPQ and FSETNAATTVPA. Residues 154-174 traverse the membrane as a helical segment; that stretch reads YLWMLHSVTLFLNLLACLAWF. Topologically, residues 175–181 are lumenal; the sequence is TSDAANG. A helical membrane pass occupies residues 182-202; that stretch reads TAFGLSILWFLIFTPCAFLCW. Topologically, residues 203-218 are cytoplasmic; that stretch reads YRPIYKAFRSDNSFSF. The interaction with SLC9A7 stretch occupies residues 203-218; it reads YRPIYKAFRSDNSFSF. A helical transmembrane segment spans residues 219–239; the sequence is FVFFFVFFCQIGIYFIQLIGL. Residues 240 to 262 are Lumenal-facing; that stretch reads PNLGTSGWLAALSTMKNGPLAVT. A helical transmembrane segment spans residues 263-283; the sequence is IIMMVVAGFFTLCAGLSLFLL. Over 284-329 the chain is Cytoplasmic; sequence QRVHAFYRRTGASFQQAQEEFSQGIFSSRTFRGAASSAARGAFQGN. Phosphoserine occurs at positions 319 and 320.

Belongs to the SCAMP family. Interacts with SLC6A4 and SLC9A7. Interacts with SLC9A5; this interaction regulates SLC9A5 cell-surface targeting and SLC9A5 activity.

It localises to the golgi apparatus. Its subcellular location is the trans-Golgi network membrane. It is found in the recycling endosome membrane. In terms of biological role, functions in post-Golgi recycling pathways. Acts as a recycling carrier to the cell surface. In Mus musculus (Mouse), this protein is Secretory carrier-associated membrane protein 2 (Scamp2).